The primary structure comprises 614 residues: DBH-like monooxygenase protein 1 (614 aa).

The first 22 residues, 1 to 22 (MRPLRPWALLLGALLGAAAAAA), serve as a signal peptide directing secretion. The Lumenal portion of the chain corresponds to 23–592 (RRYPHVAVLD…SSSCLPCSLS (570 aa)). Positions 35–148 (AAYRLLWGRR…STVRVIWAYH (114 aa)) constitute a DOMON domain. An N-linked (GlcNAc...) asparagine glycan is attached at Asn114. The active site involves Tyr203. Disulfide bonds link Cys205/Cys257 and Cys242/Cys269. Cu cation is bound by residues His235 and His236. Asn247 carries an N-linked (GlcNAc...) asparagine glycan. The Cu cation site is built by His307, His389, His391, and Met464. Cystine bridges form between Cys364–Cys480, Cys368–Cys550, and Cys443–Cys465. His389 is an active-site residue. Asn476 and Asn517 each carry an N-linked (GlcNAc...) asparagine glycan. The chain crosses the membrane as a helical span at residues 593 to 613 (LTLLFVVYVASSTIGNFGPVV).

Belongs to the copper type II ascorbate-dependent monooxygenase family. Requires Cu(2+) as cofactor.

It localises to the endoplasmic reticulum membrane. The protein is DBH-like monooxygenase protein 1 (MOXD1) of Gallus gallus (Chicken).